Here is a 373-residue protein sequence, read N- to C-terminus: Queuine tRNA-ribosyltransferase (373 aa).

Residue D89 is the Proton acceptor of the active site. Substrate is bound by residues 89–93 (DSGGF), D143, Q192, and G220. An RNA binding region spans residues 251–257 (GVGTPED). D270 functions as the Nucleophile in the catalytic mechanism. The interval 275–279 (TRNAR) is RNA binding; important for wobble base 34 recognition. Zn(2+)-binding residues include C308, C310, C313, and H339.

The protein belongs to the queuine tRNA-ribosyltransferase family. As to quaternary structure, homodimer. Within each dimer, one monomer is responsible for RNA recognition and catalysis, while the other monomer binds to the replacement base PreQ1. The cofactor is Zn(2+).

It catalyses the reaction 7-aminomethyl-7-carbaguanine + guanosine(34) in tRNA = 7-aminomethyl-7-carbaguanosine(34) in tRNA + guanine. The protein operates within tRNA modification; tRNA-queuosine biosynthesis. Functionally, catalyzes the base-exchange of a guanine (G) residue with the queuine precursor 7-aminomethyl-7-deazaguanine (PreQ1) at position 34 (anticodon wobble position) in tRNAs with GU(N) anticodons (tRNA-Asp, -Asn, -His and -Tyr). Catalysis occurs through a double-displacement mechanism. The nucleophile active site attacks the C1' of nucleotide 34 to detach the guanine base from the RNA, forming a covalent enzyme-RNA intermediate. The proton acceptor active site deprotonates the incoming PreQ1, allowing a nucleophilic attack on the C1' of the ribose to form the product. After dissociation, two additional enzymatic reactions on the tRNA convert PreQ1 to queuine (Q), resulting in the hypermodified nucleoside queuosine (7-(((4,5-cis-dihydroxy-2-cyclopenten-1-yl)amino)methyl)-7-deazaguanosine). In Aliarcobacter butzleri (strain RM4018) (Arcobacter butzleri), this protein is Queuine tRNA-ribosyltransferase.